Consider the following 421-residue polypeptide: Putative zinc finger protein R05D3.3 (421 aa).

C2H2-type zinc fingers lie at residues 207-228 (VLCV…IEAH) and 234-257 (YKCS…RTQH). Positions 400–421 (GSSITDSNEPGPSEIKKELAEV) are disordered.

It is found in the nucleus. The protein is Putative zinc finger protein R05D3.3 of Caenorhabditis elegans.